Consider the following 218-residue polypeptide: Adenylate kinase (218 aa).

10-15 (GAGKGT) contributes to the ATP binding site. An NMP region spans residues 30 to 59 (STGDMLRAAINEGTPLGLEAKKVMDAGKLV). AMP-binding positions include Thr31, Arg36, 57–59 (KLV), 85–88 (GFPR), and Gln92. Residues 122 to 159 (GRRVHPASGRTYHVLFNPPAKEGVDDITGDPLVQREDD) are LID. ATP is bound by residues Arg123 and 132-133 (TY). AMP contacts are provided by Arg156 and Arg167. Residue Gly203 coordinates ATP.

The protein belongs to the adenylate kinase family. Monomer.

The protein resides in the cytoplasm. The catalysed reaction is AMP + ATP = 2 ADP. It functions in the pathway purine metabolism; AMP biosynthesis via salvage pathway; AMP from ADP: step 1/1. Its function is as follows. Catalyzes the reversible transfer of the terminal phosphate group between ATP and AMP. Plays an important role in cellular energy homeostasis and in adenine nucleotide metabolism. This Chlorobium phaeobacteroides (strain BS1) protein is Adenylate kinase.